Here is a 412-residue protein sequence, read N- to C-terminus: Interferon-inducible GTPase 5 (412 aa).

In terms of domain architecture, IRG-type G spans 51–234 (TRLEVGVTGE…PMLVTTWEHD (184 aa)). GTP contacts are provided by residues 60-67 (ESGAGKSS), 85-89 (TGVVE), and 215-217 (SNL). Serine 246 and serine 303 each carry phosphoserine.

This sequence belongs to the TRAFAC class dynamin-like GTPase superfamily. IRG family. Interacts with PLIN2/ADRP and COX4I1/COXIV. In terms of tissue distribution, expressed in spermatozoa tails from the testis and epididymis, where it may be a component of the fibrous sheath (at protein level).

Its subcellular location is the cell projection. The protein localises to the cilium. It localises to the flagellum. The protein resides in the lipid droplet. The catalysed reaction is GTP + H2O = GDP + phosphate + H(+). Required for sperm motility and therefore male fertility, via positive regulation of spermatozoa fibrous sheath formation. This is Interferon-inducible GTPase 5 from Mus musculus (Mouse).